The chain runs to 707 residues: E3 ubiquitin-protein ligase MARCHF7 (707 aa).

Position 1 is an N-acetylmethionine (M1). Disordered regions lie at residues 1–126 (MESK…QVPR), 157–279 (LMDY…RRTT), 294–343 (FFSR…RASE), 361–425 (SHNH…HIFR), and 444–473 (AANR…GRNT). A compositionally biased stretch (low complexity) spans 17 to 33 (SSSLSARMMSGSRGSSL). Over residues 37–48 (YHSRDSSFRLDS) the composition is skewed to basic and acidic residues. The span at 52 to 65 (STSASASASPFQSA) shows a compositional bias: low complexity. 4 stretches are compositionally biased toward polar residues: residues 66-83 (WYSE…SQNQ), 95-126 (SCTN…QVPR), 189-212 (NSMS…HQTI), and 254-270 (ISNS…FQES). Low complexity predominate over residues 294–303 (FFSRRSSQDS). 3 stretches are compositionally biased toward polar residues: residues 304–336 (LNTR…TSEV), 373–392 (FNQE…SLRN), and 412–421 (IPTSDTSSRS). Phosphoserine is present on residues S317 and S389. Low complexity predominate over residues 444–470 (AANRPQASAASSSATTGGSTSDSAQGG). An RING-CH-type zinc finger spans residues 544-614 (SEEEEGDLCR…ELCKEKLELN (71 aa)). Residues C552, C555, C570, C572, H580, C583, C604, and C607 each contribute to the Zn(2+) site. T686 carries the phosphothreonine modification. A phosphoserine mark is found at S687 and S691.

The protein resides in the cytoplasm. The catalysed reaction is S-ubiquitinyl-[E2 ubiquitin-conjugating enzyme]-L-cysteine + [acceptor protein]-L-lysine = [E2 ubiquitin-conjugating enzyme]-L-cysteine + N(6)-ubiquitinyl-[acceptor protein]-L-lysine.. The protein operates within protein modification; protein ubiquitination. E3 ubiquitin-protein ligase which may specifically enhance the E2 activity of HIP2. E3 ubiquitin ligases accept ubiquitin from an E2 ubiquitin-conjugating enzyme in the form of a thioester and then directly transfer the ubiquitin to targeted substrates. May be involved in T-cell proliferation by regulating LIF secretion. May play a role in lysosome homeostasis. Promotes 'Lys-6', 'Lys-11' and 'Lys-63'-linked mixed polyubiquitination on ATG14 leading to the inhibition of autophagy by impairing the interaction between ATG14 and STX7. Participates in the dopamine-mediated negative regulation of the NLRP3 inflammasome by promoting its uibiquitination and subsequent degradation. This is E3 ubiquitin-protein ligase MARCHF7 (MARCHF7) from Pongo abelii (Sumatran orangutan).